The sequence spans 82 residues: Small ribosomal subunit protein bS18 (82 aa).

The segment at 1-20 is disordered; sequence MVDINQIPTRRPFHRRHKTC.

This sequence belongs to the bacterial ribosomal protein bS18 family. As to quaternary structure, part of the 30S ribosomal subunit. Forms a tight heterodimer with protein bS6.

Functionally, binds as a heterodimer with protein bS6 to the central domain of the 16S rRNA, where it helps stabilize the platform of the 30S subunit. In Brucella suis (strain ATCC 23445 / NCTC 10510), this protein is Small ribosomal subunit protein bS18.